A 68-amino-acid polypeptide reads, in one-letter code: Negative regulatory protein YxlD (68 aa).

A run of 2 helical transmembrane segments spans residues 5 to 25 (EIIITVAACLIVLAQGIFLFI) and 37 to 57 (WGIVGLIQAPMPLICYYFFVI).

Its subcellular location is the cell membrane. Its function is as follows. Together with YxlE, is important for negative regulation of sigma Y activity, being the major negative regulator. The polypeptide is Negative regulatory protein YxlD (yxlD) (Bacillus subtilis (strain 168)).